The sequence spans 147 residues: Small ribosomal subunit protein uS12 (147 aa).

Belongs to the universal ribosomal protein uS12 family. Part of the 30S ribosomal subunit.

With S4 and S5 plays an important role in translational accuracy. Located at the interface of the 30S and 50S subunits. The chain is Small ribosomal subunit protein uS12 from Saccharolobus solfataricus (strain ATCC 35092 / DSM 1617 / JCM 11322 / P2) (Sulfolobus solfataricus).